A 287-amino-acid polypeptide reads, in one-letter code: Alpha-tubulin N-acetyltransferase 2 (287 aa).

The 192-residue stretch at 2–193 folds into the N-acetyltransferase domain; the sequence is VEFAFDIKHL…NNFVLYEGFF (192 aa). Acetyl-CoA contacts are provided by residues 127–140 and 163–172; these read FYVH…GQGK and SNKMLAFMAK.

The protein belongs to the acetyltransferase ATAT1 family.

Its subcellular location is the midbody. It is found in the midbody ring. The enzyme catalyses L-lysyl-[alpha-tubulin] + acetyl-CoA = N(6)-acetyl-L-lysyl-[alpha-tubulin] + CoA + H(+). Specifically acetylates 'Lys-40' in alpha-tubulin on the lumenal side of microtubules. Promotes microtubule destabilization and accelerates microtubule dynamics; this activity may be independent of acetylation activity. Acetylates alpha-tubulin with a slow enzymatic rate, due to a catalytic site that is not optimized for acetyl transfer. Enters the microtubule through each end and diffuses quickly throughout the lumen of microtubules. Acetylates only long/old microtubules because of its slow acetylation rate since it does not have time to act on dynamically unstable microtubules before the enzyme is released. Main acetyltransferase responsible for alpha-tubulin 'Lys-40' acetylation in germline cells during the early stages of oogenesis. Required for normal egg chamber separation. This Drosophila melanogaster (Fruit fly) protein is Alpha-tubulin N-acetyltransferase 2.